Consider the following 125-residue polypeptide: Succinate dehydrogenase assembly factor 3, mitochondrial (125 aa).

The N-terminal 30 residues, 1 to 30 (MPGKHVSRVRALYRRILLLHRALPPDLKAL), are a transit peptide targeting the mitochondrion.

This sequence belongs to the complex I LYR family. SDHAF3 subfamily. In terms of assembly, interacts with Sdhb within an Sdha-Sdhb subcomplex.

Its subcellular location is the mitochondrion matrix. Functionally, plays an essential role in the assembly of succinate dehydrogenase (SDH), an enzyme complex (also referred to as respiratory complex II) that is a component of both the tricarboxylic acid (TCA) cycle and the mitochondrial electron transport chain, and which couples the oxidation of succinate to fumarate with the reduction of ubiquinone (coenzyme Q) to ubiquinol. Promotes maturation of the iron-sulfur protein subunit Sdhb of the SDH catalytic dimer, protecting it from the deleterious effects of oxidants. May act together with SDHAF1. The chain is Succinate dehydrogenase assembly factor 3, mitochondrial from Mus musculus (Mouse).